Reading from the N-terminus, the 118-residue chain is Transcription factor PAR1 (118 aa).

Residues 1-58 are disordered; it reads MEETLATPDATRRSLSPSCSATVKSRAAGFERRTKRRLSETNASVREDREEAEEEEDE. Positions 13–23 are enriched in polar residues; the sequence is RSLSPSCSATV. Positions 43 to 92 constitute a bHLH domain; sequence ASVREDREEAEEEEDEVKEKIEALQRIIPGGAALGVDALFEETAGYILSL.

Belongs to the bHLH protein family. As to quaternary structure, homodimer.

It localises to the nucleus. Its function is as follows. Atypical bHLH transcription factor that acts as a negative regulator of a variety of shade avoidance syndrome (SAS) responses, including seedling elongation and photosynthetic pigment accumulation. Acts as a direct transcriptional repressor of two auxin-responsive genes, SAUR15 and SAUR68. May function in integrating shade and hormone transcriptional networks in response to light and auxin changes. This is Transcription factor PAR1 (PAR1) from Arabidopsis thaliana (Mouse-ear cress).